Here is a 419-residue protein sequence, read N- to C-terminus: Tetraspanning orphan receptor (419 aa).

Over 1-28 (MPRAPALLTNDARHQFTCCLCLHVRTGT) the chain is Cytoplasmic. Residues 29–49 (IIFGITQIIIQLVFISFLFLM) traverse the membrane as a helical segment. The Extracellular portion of the chain corresponds to 50 to 165 (TFNPRLIPED…EVKIKHFSPY (116 aa)). Residues 166-186 (IAVCVTTFSLAFCCFMVHGAI) traverse the membrane as a helical segment. The Cytoplasmic portion of the chain corresponds to 187-193 (TKQPTHL). A helical membrane pass occupies residues 194–214 (LPFFFIQVFDLIICLIHILGF). Residues 215 to 240 (MSSTSDLRLMIHTKTGPIYIKSTGFT) are Extracellular-facing. The chain crosses the membrane as a helical span at residues 241-261 (FIILSISCMMLAFKAYCLGMV). The Cytoplasmic segment spans residues 262 to 419 (WDCYKYLMLN…SAPSNAHSSC (158 aa)). Low complexity predominate over residues 303–316 (NNSIGNSGSPNEPN). Positions 303–328 (NNSIGNSGSPNEPNTRPRPEPITYDP) are disordered.

Interacts (via N-terminal extracellular domain) with human C2a. Phosphorylated on tyrosine residues.

It is found in the cell membrane. Its function is as follows. Cell surface receptor that binds to human complement C2a protein. This results in inhibition of the classical and lectin pathways of complement activation, probably due to interference with binding of C2a to C4b and interference with cleavage by C1 or MASP2 such that C3 convertase cannot be formed. This infers resistance to complement-mediated cell lysis, allowing parasite survival and infection. This chain is Tetraspanning orphan receptor, found in Schistosoma mansoni (Blood fluke).